Consider the following 321-residue polypeptide: MKKMKKLLLLLSASFAFSLQMDFKEVKKFPYIKYVTAWKGTPAETKDVAVPNVYIVVGQKESPEVLTSAAKVAFYLGQWTDGIGLSPKLVKEGKIPKLIISDKEVEKYKDRNLIVIGTNNEIVRELGLKFKEPTLKVVEKDGRKILIVGGKDTKEVVKAASFLADRVISFKVGAYNTFFNWVRVRGMIEHGNYEGAYDMLTDSRGVHACGRNMSLAAPMMAKFPPEVKKVVKKRNKIMYVELPKALKEENKEKAKKLWREAMITCFQCHHGIGIPKMRKFEPLADIHSKHQRIANKYGLSCKDCHYGITEYRGYEEGTTEQ.

The first 18 residues, 1–18 (MKKMKKLLLLLSASFAFS), serve as a signal peptide directing secretion.

This is an uncharacterized protein from Aquifex aeolicus (strain VF5).